Reading from the N-terminus, the 435-residue chain is Trigger factor (435 aa).

A PPIase FKBP-type domain is found at 162 to 247 (GDRINIDYRG…LSGVESSKLP (86 aa)).

This sequence belongs to the FKBP-type PPIase family. Tig subfamily.

It is found in the cytoplasm. The catalysed reaction is [protein]-peptidylproline (omega=180) = [protein]-peptidylproline (omega=0). In terms of biological role, involved in protein export. Acts as a chaperone by maintaining the newly synthesized protein in an open conformation. Functions as a peptidyl-prolyl cis-trans isomerase. The sequence is that of Trigger factor from Nitrosospira multiformis (strain ATCC 25196 / NCIMB 11849 / C 71).